The sequence spans 441 residues: MSRNFSNEQFSVNLEEQPGCVVSAEVKTTPQLLDKLHKQAIKKIKKDVILPGFRKGKAPDGIIVSRYPSQVTKELNQLLIQSAYQALASVGDRRPLSPQAIKSTSVTKADINEGGQVNFTYEAFPTISDIPWDKLSLSEEPAVKDITDEEMEKGLQNISYFFATKTPVTRTSQEGDFISLSLHVSKQNEEGVPTPIFENKYFKLCEEEMTDAFKTKFLGISAGHRVTEIIASPEIQSFLNGDVLTFTVNAVIEVVAPELDDDKARQLQAESLEDLKKKLRIQLENQAKDRQHQQCFAEAENALASIIDFDLPTSMLEDRLAMLTRAKLLNARLIQYCSDEELENKKSDLLKEAELEAKKTLKLFFLANKIFNDEKLVISREELQYMMDVCSRERYGMQPPRDISKEALQELVMAARDRLTYHKAMEKVLAKAKESATAPSA.

A PPIase FKBP-type domain is found at Gly175–Pro257.

The protein belongs to the FKBP-type PPIase family. Tig subfamily.

It is found in the cytoplasm. It carries out the reaction [protein]-peptidylproline (omega=180) = [protein]-peptidylproline (omega=0). In terms of biological role, involved in protein export. Acts as a chaperone by maintaining the newly synthesized protein in an open conformation. Functions as a peptidyl-prolyl cis-trans isomerase. This chain is Trigger factor, found in Chlamydia abortus (strain DSM 27085 / S26/3) (Chlamydophila abortus).